The following is a 328-amino-acid chain: L-lactate dehydrogenase (328 aa).

NAD(+)-binding positions include Val18, Glu39, Lys46, Tyr71, and 85-86 (GA). Substrate-binding residues include Gln88 and Arg94. Residues Ser107, 124-126 (AAN), and Ser149 each bind NAD(+). 126 to 129 (NPVD) contacts substrate. 154-157 (DSAR) contacts substrate. 2 residues coordinate beta-D-fructose 1,6-bisphosphate: Arg159 and His174. His181 functions as the Proton acceptor in the catalytic mechanism. The residue at position 226 (Tyr226) is a Phosphotyrosine. Thr235 contributes to the substrate binding site.

Belongs to the LDH/MDH superfamily. LDH family. Homotetramer.

It is found in the cytoplasm. It carries out the reaction (S)-lactate + NAD(+) = pyruvate + NADH + H(+). The protein operates within fermentation; pyruvate fermentation to lactate; (S)-lactate from pyruvate: step 1/1. Its activity is regulated as follows. Allosterically activated by fructose 1,6-bisphosphate (FBP). In terms of biological role, catalyzes the conversion of lactate to pyruvate. The chain is L-lactate dehydrogenase from Streptococcus thermophilus (strain CNRZ 1066).